Consider the following 228-residue polypeptide: uncharacterized protein (228 aa).

S-adenosyl-L-methionine is bound by residues G179, I199, and L208.

Belongs to the class IV-like SAM-binding methyltransferase superfamily. RNA methyltransferase TrmH family.

This is an uncharacterized protein from Borreliella burgdorferi (strain ATCC 35210 / DSM 4680 / CIP 102532 / B31) (Borrelia burgdorferi).